Reading from the N-terminus, the 1293-residue chain is DNA-directed RNA polymerase subunit beta' (1293 aa).

The Zn(2+) site is built by Cys60, Cys62, Cys75, and Cys78. Residues Asp535, Asp537, and Asp539 each coordinate Mg(2+). Positions 873, 950, 957, and 960 each coordinate Zn(2+).

It belongs to the RNA polymerase beta' chain family. The RNAP catalytic core consists of 2 alpha, 1 beta, 1 beta' and 1 omega subunit. When a sigma factor is associated with the core the holoenzyme is formed, which can initiate transcription. Mg(2+) serves as cofactor. It depends on Zn(2+) as a cofactor.

The catalysed reaction is RNA(n) + a ribonucleoside 5'-triphosphate = RNA(n+1) + diphosphate. In terms of biological role, DNA-dependent RNA polymerase catalyzes the transcription of DNA into RNA using the four ribonucleoside triphosphates as substrates. In Cutibacterium acnes (strain DSM 16379 / KPA171202) (Propionibacterium acnes), this protein is DNA-directed RNA polymerase subunit beta'.